A 331-amino-acid chain; its full sequence is Terpene synthase 8 (331 aa).

The short motif at Asp97–Glu102 is the DDxx(x)D/E motif element. The NDxxSxxxD/E motif signature appears at Asn228–Glu236.

It belongs to the terpene synthase family.

Functionally, terpene synthase that converts its substrate farnesyl diphosphate (FPP) into several yet unidentified sesquiterpenes. This chain is Terpene synthase 8, found in Dictyostelium purpureum (Slime mold).